Reading from the N-terminus, the 383-residue chain is Acetylornithine deacetylase (383 aa).

A Zn(2+)-binding site is contributed by H80. The active site involves D82. D112 is a binding site for Zn(2+). Residue E144 is part of the active site. Zn(2+) contacts are provided by E145, E169, and H355.

This sequence belongs to the peptidase M20A family. ArgE subfamily. In terms of assembly, homodimer. Zn(2+) is required as a cofactor. It depends on Co(2+) as a cofactor. The cofactor is glutathione.

It is found in the cytoplasm. It catalyses the reaction N(2)-acetyl-L-ornithine + H2O = L-ornithine + acetate. Its pathway is amino-acid biosynthesis; L-arginine biosynthesis; L-ornithine from N(2)-acetyl-L-ornithine (linear): step 1/1. Its function is as follows. Catalyzes the hydrolysis of the amide bond of N(2)-acetylated L-amino acids. Cleaves the acetyl group from N-acetyl-L-ornithine to form L-ornithine, an intermediate in L-arginine biosynthesis pathway, and a branchpoint in the synthesis of polyamines. The sequence is that of Acetylornithine deacetylase from Escherichia coli O9:H4 (strain HS).